A 199-amino-acid polypeptide reads, in one-letter code: GTP cyclohydrolase-2 (199 aa).

52–56 lines the GTP pocket; the sequence is RMHSE. Zn(2+) contacts are provided by Cys-57, Cys-68, and Cys-70. GTP-binding positions include Gln-73, 94-96, and Thr-116; that span reads EGR. The active-site Proton acceptor is the Asp-128. The active-site Nucleophile is the Arg-130. Positions 151 and 156 each coordinate GTP.

The protein belongs to the GTP cyclohydrolase II family. The cofactor is Zn(2+).

It carries out the reaction GTP + 4 H2O = 2,5-diamino-6-hydroxy-4-(5-phosphoribosylamino)-pyrimidine + formate + 2 phosphate + 3 H(+). The protein operates within cofactor biosynthesis; riboflavin biosynthesis; 5-amino-6-(D-ribitylamino)uracil from GTP: step 1/4. Its function is as follows. Catalyzes the conversion of GTP to 2,5-diamino-6-ribosylamino-4(3H)-pyrimidinone 5'-phosphate (DARP), formate and pyrophosphate. This Aliivibrio salmonicida (strain LFI1238) (Vibrio salmonicida (strain LFI1238)) protein is GTP cyclohydrolase-2.